We begin with the raw amino-acid sequence, 299 residues long: ATP phosphoribosyltransferase (299 aa).

It belongs to the ATP phosphoribosyltransferase family. Long subfamily. In terms of assembly, equilibrium between an active dimeric form, an inactive hexameric form and higher aggregates. Interconversion between the various forms is largely reversible and is influenced by the natural substrates and inhibitors of the enzyme. The cofactor is Mg(2+).

The protein localises to the cytoplasm. It carries out the reaction 1-(5-phospho-beta-D-ribosyl)-ATP + diphosphate = 5-phospho-alpha-D-ribose 1-diphosphate + ATP. It participates in amino-acid biosynthesis; L-histidine biosynthesis; L-histidine from 5-phospho-alpha-D-ribose 1-diphosphate: step 1/9. Feedback inhibited by histidine. In terms of biological role, catalyzes the condensation of ATP and 5-phosphoribose 1-diphosphate to form N'-(5'-phosphoribosyl)-ATP (PR-ATP). Has a crucial role in the pathway because the rate of histidine biosynthesis seems to be controlled primarily by regulation of HisG enzymatic activity. This Blochmanniella pennsylvanica (strain BPEN) protein is ATP phosphoribosyltransferase.